The following is a 302-amino-acid chain: MDYLLQVKVGALVGLLLLTLFFGFIPARMKWFHVTGGTELHKAVLSFVSCFAGGVFLSACLLDIIPDYLSDIHGELQKRDLDDGFPLPEFIMACGFFTVLILEKMVLSCTEGHRNEETAPLLAPAAPNGHAHGHPSVNDLEGSGHHVHVDFHAHSSFRSFMLFLSLSLHSVFEGLAIGLQTTNAKVLEICIAILVHKSIIVFSLSVKLVQSAVKPLWVVLYVTVFAIMSPLGIGIGIVVIETERQAGGLIQAVLEGLAAGTFIYITFLEILPHELNSSERPLLKVLFLLCGFSIMAALCFLG.

The Extracellular segment spans residues 1-6 (MDYLLQ). Residues 7–27 (VKVGALVGLLLLTLFFGFIPA) form a helical membrane-spanning segment. The Cytoplasmic segment spans residues 28 to 44 (RMKWFHVTGGTELHKAV). A helical transmembrane segment spans residues 45–65 (LSFVSCFAGGVFLSACLLDII). Over 66 to 86 (PDYLSDIHGELQKRDLDDGFP) the chain is Extracellular. The chain crosses the membrane as a helical span at residues 87–107 (LPEFIMACGFFTVLILEKMVL). At 108 to 158 (SCTEGHRNEETAPLLAPAAPNGHAHGHPSVNDLEGSGHHVHVDFHAHSSFR) the chain is on the cytoplasmic side. The helical transmembrane segment at 159-179 (SFMLFLSLSLHSVFEGLAIGL) threads the bilayer. Residues 180-185 (QTTNAK) are Extracellular-facing. Residues 186–206 (VLEICIAILVHKSIIVFSLSV) form a helical membrane-spanning segment. Residues 207–219 (KLVQSAVKPLWVV) are Cytoplasmic-facing. A helical membrane pass occupies residues 220-240 (LYVTVFAIMSPLGIGIGIVVI). Residues 241–247 (ETERQAG) lie on the Extracellular side of the membrane. The chain crosses the membrane as a helical span at residues 248 to 268 (GLIQAVLEGLAAGTFIYITFL). Residues 269 to 281 (EILPHELNSSERP) lie on the Cytoplasmic side of the membrane. The helical transmembrane segment at 282-302 (LLKVLFLLCGFSIMAALCFLG) threads the bilayer.

Belongs to the ZIP transporter (TC 2.A.5) family. Ubiquitous. Highest levels in ovary, high levels in heart, eye, kidney and brain, moderate levels in intestine and low levels in gill and skin.

Its subcellular location is the cell membrane. The protein localises to the endoplasmic reticulum membrane. It carries out the reaction Zn(2+)(in) = Zn(2+)(out). In terms of biological role, transporter for the divalent cation Zn(2+). Mediates the influx of Zn(2+) into cells from extracellular space. In Danio rerio (Zebrafish), this protein is Zinc transporter ZIP1 (slc39a1).